A 1141-amino-acid polypeptide reads, in one-letter code: Serine-aspartate repeat-containing protein E (1141 aa).

The N-terminal stretch at 1–52 (MINRDNKKAITKKGMISNRLNKFSIRKYTVGTASILVGTTLIFGLGNQEAKA) is a signal peptide. Positions 23-34 (FSIRKYTVGTAS) match the YSIRK-G/S signaling motif motif. Residues 53-601 (AENTSTENAK…GDGTVKPEEK (549 aa)) form a ligand binding A region region. A disordered region spans residues 54–248 (ENTSTENAKQ…RSTKPVATAP (195 aa)). The span at 61–75 (AKQDDATTSDNKEVV) shows a compositional bias: basic and acidic residues. Low complexity predominate over residues 77–90 (ETENNSTTENDSTN). Residues 92–108 (IKKETNTDSQPEAKEES) are compositionally biased toward basic and acidic residues. The segment covering 109-126 (TTSSTQQQQNNVTATTET) has biased composition (low complexity). The segment covering 130 to 145 (NIEKENVKPSTDKTAT) has biased composition (basic and acidic residues). The span at 159–207 (NYTNNDVTTKPSTSEIQTKPTTPQESTNIENSQPQPTPSKVDNQVTDAT) shows a compositional bias: polar residues. Positions 216-241 (SKEELKNNPEKLKELVRNDNNTDRST) are enriched in basic and acidic residues. CNA-B domains lie at 602 to 714 (LYKI…YKEP), 715 to 824 (KYNL…YKTP), and 825 to 935 (KYSL…EEDT). The segment at 899–1117 (VTNTTEDDKD…GSENNGSNNA (219 aa)) is disordered. Acidic residues-rich tracts occupy residues 903 to 913 (TEDDKDADGGE) and 930 to 1080 (YFEE…DSDS). The LPXTG sorting signal motif lies at 1104–1108 (LPETG). T1107 is modified (pentaglycyl murein peptidoglycan amidated threonine). Positions 1108 to 1141 (GSENNGSNNATLFGGLFAALGSLLLFGRRKKQNK) are cleaved as a propeptide — removed by sortase.

It belongs to the serine-aspartate repeat-containing protein (SDr) family. In terms of assembly, interacts with host complement factor H/CFAH (via C-terminus). Interacts with host complement regulator C4BPA.

The protein resides in the secreted. Its subcellular location is the cell wall. Its function is as follows. Cell surface-associated calcium-binding protein which plays an important role in adhesion and pathogenesis. Contributes to the resistance to killing by innate immune components in blood and thus attenuates bacterial clearance by interacting with host complement factor H/CFAH and modulating its activity. Also inhibits bacterial opsonization and killing by interacting with host complement regulator C4BPA and thus inhibiting classical complement pathway activation. The polypeptide is Serine-aspartate repeat-containing protein E (sdrE) (Staphylococcus aureus (strain N315)).